The chain runs to 143 residues: MELLVKRINKEAILPFYAHEGDAGLDLFSVEEVLIKPMERKLIATGIKIQLPPNTEGQVRPRSGLALAHGITLLNSPGTIDEGYRGEIKVLMINLGQEGFLIKKGMKIAQMVIKPIEQVLIKEVVELKDTERGEGGFGSTGTM.

Substrate-binding positions include 62–64 (RSG), N75, 79–81 (TID), and K89.

This sequence belongs to the dUTPase family. Mg(2+) serves as cofactor.

It catalyses the reaction dUTP + H2O = dUMP + diphosphate + H(+). It functions in the pathway pyrimidine metabolism; dUMP biosynthesis; dUMP from dCTP (dUTP route): step 2/2. Functionally, this enzyme is involved in nucleotide metabolism: it produces dUMP, the immediate precursor of thymidine nucleotides and it decreases the intracellular concentration of dUTP so that uracil cannot be incorporated into DNA. In Clostridium kluyveri (strain ATCC 8527 / DSM 555 / NBRC 12016 / NCIMB 10680 / K1), this protein is Deoxyuridine 5'-triphosphate nucleotidohydrolase.